Here is a 465-residue protein sequence, read N- to C-terminus: Mothers against decapentaplegic homolog 5 (465 aa).

In terms of domain architecture, MH1 spans 13 to 137 (PAVKRLLGWK…YKRVESPVLP (125 aa)). Cys-65, Cys-110, Cys-122, and His-127 together coordinate Zn(2+). The segment at 163–242 (NEPHMPHNAT…MGQDNSQSMD (80 aa)) is disordered. Positions 173 to 183 (FPDSFQQPNST) are enriched in polar residues. The segment covering 198-214 (ASSTYPSSPASSGPSSP) has biased composition (low complexity). The MH2 domain maps to 271 to 465 (WCSIVYYELN…SPLNPISSVS (195 aa)).

Belongs to the dwarfin/SMAD family. As to quaternary structure, may form trimers with the co-SMAD SMAD4.

The protein resides in the cytoplasm. The protein localises to the nucleus. In terms of biological role, transcriptional modulator activated by BMP (bone morphogenetic proteins) type 1 receptor kinase. SMAD5 is a receptor-regulated SMAD (R-SMAD). This Gallus gallus (Chicken) protein is Mothers against decapentaplegic homolog 5 (SMAD5).